We begin with the raw amino-acid sequence, 105 residues long: Small ribosomal subunit protein eS24 (105 aa).

Belongs to the eukaryotic ribosomal protein eS24 family.

In Ignicoccus hospitalis (strain KIN4/I / DSM 18386 / JCM 14125), this protein is Small ribosomal subunit protein eS24.